A 342-amino-acid polypeptide reads, in one-letter code: Methionine import ATP-binding protein MetN (342 aa).

Residues 2–241 (ITLEQVTKIY…PQQPITKRFV (240 aa)) form the ABC transporter domain. An ATP-binding site is contributed by 38–45 (GYSGAGKS).

Belongs to the ABC transporter superfamily. Methionine importer (TC 3.A.1.24) family. The complex is composed of two ATP-binding proteins (MetN), two transmembrane proteins (MetI) and a solute-binding protein (MetQ).

It is found in the cell membrane. The enzyme catalyses L-methionine(out) + ATP + H2O = L-methionine(in) + ADP + phosphate + H(+). The catalysed reaction is D-methionine(out) + ATP + H2O = D-methionine(in) + ADP + phosphate + H(+). In terms of biological role, part of the ABC transporter complex MetNIQ involved in methionine import. Responsible for energy coupling to the transport system. This is Methionine import ATP-binding protein MetN from Geobacillus kaustophilus (strain HTA426).